The following is a 3938-amino-acid chain: Protein bassoon (3938 aa).

A disordered region spans residues 1-158; sequence MGNEASLEGG…PTSPYSVPQI (158 aa). Glycine 2 is lipidated: N-myristoyl glycine. The segment covering 9-29 has biased composition (gly residues); that stretch reads GGAGEGPLPPGGSGLGPGPGA. Residues 31–61 are compositionally biased toward low complexity; the sequence is KPPSALAGGGQLPVAGAARAAGPPTPGLGLV. Residues 62–70 are 4 X 2 AA tandem repeats of P-G; that stretch reads PGPGPGPGP. Composition is skewed to polar residues over residues 86 to 98 and 127 to 154; these read QRAT…QASA and QVDS…SPYS. Residue serine 142 is modified to Phosphoserine. The residue at position 145 (arginine 145) is an Omega-N-methylarginine. C4-type zinc fingers lie at residues 167–190 and 195–217; these read CPIC…CTQC and CNQC…CLNC. Disordered regions lie at residues 228–346 and 361–456; these read TTAP…LTGK and LMSV…KTMP. Polar residues predominate over residues 230-240; it reads APRSKSQQQLH. Phosphoserine is present on residues serine 241 and serine 245. Polar residues predominate over residues 361–376; it reads LMSVQPEADTQGQPSP. The segment covering 394–406 has biased composition (pro residues); it reads PRPPGSGPGPGPT. 2 C4-type zinc fingers span residues 462-485 and 490-512; these read CPLC…CTAC and CTLC…CLNC. 4 disordered regions span residues 523 to 921, 934 to 1247, 1294 to 1541, and 1561 to 1611; these read GEPA…LQGG, GRLW…TPAG, MDPM…WQQS, and RMVH…RAPS. Residues 526 to 539 are compositionally biased toward pro residues; the sequence is APLPLPTPQEPPAG. Over residues 548 to 589 the composition is skewed to low complexity; it reads SPLKQKGPQGPGQPSGSLPPKASPQAAKASPQAAKASPQAKP. Repeat copies occupy residues 568–574, 575–581, and 582–588. The interval 568-588 is 3 X 7 AA tandem repeats of K-A-S-P-Q-A-[AK]; the sequence is KASPQAAKASPQAAKASPQAK. Pro residues predominate over residues 616–629; the sequence is VPKPPPETAVPPGT. Over residues 668–677 the composition is skewed to polar residues; sequence QDLSRSPQSL. Residues 678-692 show a composition bias toward low complexity; the sequence is SDTGYSSDGVSSSQS. Over residues 693-702 the composition is skewed to polar residues; the sequence is EITGVVQQEV. Composition is skewed to acidic residues over residues 769–784 and 847–858; these read FDSD…EDDS and SAEEDNLEEDDT. The residue at position 863 (arginine 863) is an Omega-N-methylarginine. Serine 965 is subject to Phosphoserine. A compositionally biased stretch (low complexity) spans 979–996; that stretch reads PASTPSYTSGTSPTSLSS. A coiled-coil region spans residues 1032 to 1087; the sequence is IEDSSEEEELREEEELLREQEKMREVEQQRIRSTARKTRRDKEELRAQRRRERSKT. The span at 1034–1047 shows a compositional bias: acidic residues; it reads DSSEEEELREEEEL. Phosphoserine is present on residues serine 1035 and serine 1036. Over residues 1048-1061 the composition is skewed to basic and acidic residues; it reads LREQEKMREVEQQR. Serine 1085 carries the phosphoserine modification. At threonine 1087 the chain carries Phosphothreonine. 2 positions are modified to phosphoserine: serine 1093 and serine 1099. Basic and acidic residues predominate over residues 1102–1117; sequence EELRQAAEMEELHRSS. Low complexity-rich tracts occupy residues 1118–1128 and 1158–1175; these read CSEYSPSPSLD and SPTE…SGRP. Residues 1176 to 1203 adopt a coiled-coil conformation; it reads LKSAEEAYEDMMRKAELLQRQQGQAAGA. The segment covering 1177-1192 has biased composition (basic and acidic residues); sequence KSAEEAYEDMMRKAEL. The span at 1194-1204 shows a compositional bias: low complexity; that stretch reads QRQQGQAAGAR. Residues 1211-1224 are compositionally biased toward polar residues; sequence SQPTGPRSQGSFEY. Serine 1221 is modified (phosphoserine). Positions 1318 to 1328 are enriched in low complexity; it reads SFPTSTSSDSS. O-linked (GlcNAc) threonine glycosylation is present at threonine 1339. Residues 1342 to 1351 show a composition bias toward basic and acidic residues; that stretch reads FAKEPQEPLK. Low complexity-rich tracts occupy residues 1352–1364 and 1374–1386; these read LHSS…LASK and PGTP…APCP. Threonine 1380 carries an O-linked (GlcNAc) threonine glycan. Residues 1402-1426 show a composition bias toward polar residues; that stretch reads SPSTSSTIHSYGQPPTTANYGSQTE. Phosphoserine is present on residues serine 1470, serine 1479, and serine 1481. Residues 1476 to 1487 are compositionally biased toward low complexity; the sequence is STPSESPTFSPS. 2 stretches are compositionally biased toward polar residues: residues 1496–1510 and 1561–1597; these read EFST…SSDI and RMVH…SQMP. Omega-N-methylarginine occurs at positions 1780 and 1784. Arginine 1794 is modified (asymmetric dimethylarginine; alternate). At arginine 1794 the chain carries Omega-N-methylarginine; alternate. Position 1806 is an omega-N-methylarginine (arginine 1806). Residues 1914–1964 are disordered; it reads PSAPDKSVTDAALPGQSSGPFYSPRDPEPPEPLTFRAQGVVGPGPHEEQRP. Threonine 1922 carries an O-linked (GlcNAc) threonine glycan. 2 positions are modified to phosphoserine: serine 1978 and serine 2034. Residues arginine 2039 and arginine 2069 each carry the omega-N-methylarginine modification. 3 positions are modified to asymmetric dimethylarginine: arginine 2243, arginine 2253, and arginine 2259. Positions 2280–2305 are disordered; sequence AAKASGAGGPPRPELPAGGAREEPLS. Threonine 2307 is a glycosylation site (O-linked (GlcNAc) threonine). Disordered regions lie at residues 2318-2343 and 2461-2486; these read VAQA…SGVL and EEQK…PPAA. Positions 2345 to 2470 form a coiled coil; sequence RPVMEKEEAS…EEQKQRQKAP (126 aa). Threonine 2510 is a glycosylation site (O-linked (GlcNAc) threonine). Positions 2513–2648 are disordered; the sequence is PGQAREPVLH…HEASASSSAA (136 aa). A compositionally biased stretch (polar residues) spans 2527 to 2537; the sequence is SSASDMSLQTE. Serine 2564 bears the Phosphoserine mark. A phosphothreonine mark is found at threonine 2581 and threonine 2608. Over residues 2629–2641 the composition is skewed to basic and acidic residues; the sequence is RHSDSGSDSKHEA. O-linked (GlcNAc) threonine glycosylation occurs at threonine 2685. Residues 2715 to 3263 are interaction with DAO; the sequence is EPDGQAQGVA…GGVSGRPGKD (549 aa). Residues serine 2796, serine 2845, and serine 2851 each carry the phosphoserine modification. The interval 2839 to 2859 is disordered; it reads TLQRSLSDPKPLSPTAEESAK. Threonine 2930 carries O-linked (GlcNAc) threonine glycosylation. The stretch at 2933-2975 forms a coiled coil; that stretch reads SLLRELDRDLRLVEHESTKLRKKQAELDEEEKEIDAKLKYLEL. Residues 2934 to 2996 are sufficient for binding to ERC2; that stretch reads LLRELDRDLR…DRVGRDYPPL (63 aa). Serine 3007 is subject to Phosphoserine. A compositionally biased stretch (polar residues) spans 3055–3068; it reads TQYTAGSSGPTQNG. Disordered stretches follow at residues 3055–3148, 3162–3399, 3414–3546, and 3569–3910; these read TQYT…ADLE, AVTV…SRKF, QQRY…PRAH, and YHLG…VFSK. Residues 3184 to 3196 are compositionally biased toward basic and acidic residues; the sequence is EHGKAPEHPRGGD. Residues 3198–3222 are compositionally biased toward polar residues; the sequence is SSVSQSPAPTYPSDSHYTSLEQNVP. Phosphoserine is present on serine 3286. Residues 3304–3315 show a composition bias toward polar residues; the sequence is ESNGRPASTHYY. Basic and acidic residues-rich tracts occupy residues 3316-3328, 3358-3377, and 3450-3469; these read SDSD…RADK, QGME…KDVE, and LSSH…RETA. Serine 3368 is subject to Phosphoserine. Arginine 3488 bears the Omega-N-methylarginine mark. Residues 3506-3520 are compositionally biased toward low complexity; the sequence is PLGRPRPAGGALPPG. Composition is skewed to basic and acidic residues over residues 3535 to 3546 and 3578 to 3588; these read VQEHVKDGPRAH and WFDKPRDARSD. The segment covering 3638–3651 has biased composition (basic residues); that stretch reads EHRHHGDHGRHSGR. The span at 3652–3676 shows a compositional bias: basic and acidic residues; that stretch reads HAGEEPGRRAARPHARDMGRHETRP. Residues 3751–3820 are compositionally biased toward low complexity; the sequence is PQQSQPPSSR…ARLQQQSQPT (70 aa). Positions 3772–3803 form a coiled coil; that stretch reads QTQQQQQQQQQQQQQQQQQQQQQQQQGLGQQA. Position 3822 is an omega-N-methylarginine (arginine 3822). Residues 3834-3848 are compositionally biased toward pro residues; the sequence is KPQPGPTTAPGPQPA. Composition is skewed to low complexity over residues 3860–3887 and 3894–3904; these read KPAA…KTGA and GAPAGQPAAEG.

Interacts with PCLO, ERC2/CAST1, RIMS1 and UNC13A. Interacts with TPRG1L. Interacts with DYNLL1 and DYNLL2; these interactions potentially link PTVs to dynein and myosin V motor complexes. Interacts with ATG5; this interaction is important for the regulation of presynaptic autophagy. Interacts (via C-terminus) with TRIO (via N-terminus). Interacts with CTBP1. Interacts with SIAH1; this interaction negatively regulates SIAH1 E3 ligase activity. Interacts (via coiled region) with DAO; the interaction is direct. In terms of processing, myristoylated. The N-terminal myristoylation is not sufficient for presynaptic localization. In terms of tissue distribution, detected at synapses in the stratum lucidum in the hippocampus CA3 region (at protein level).

The protein localises to the cytoplasm. It is found in the presynaptic active zone. The protein resides in the cytoskeleton. Its subcellular location is the cytoplasmic vesicle. It localises to the secretory vesicle. The protein localises to the synaptic vesicle membrane. Functionally, scaffold protein of the presynaptic cytomatrix at the active zone (CAZ) which is the place in the synapse where neurotransmitter is released. After synthesis, participates in the formation of Golgi-derived membranous organelles termed Piccolo-Bassoon transport vesicles (PTVs) that are transported along axons to sites of nascent synaptic contacts. At the presynaptic active zone, regulates the spatial organization of synaptic vesicle cluster, the protein complexes that execute membrane fusion and compensatory endocytosis. Also functions in processes other than assembly such as the regulation of specific presynaptic protein ubiquitination by interacting with SIAH1 or the regulation of presynaptic autophagy by associating with ATG5. Also mediates synapse to nucleus communication leading to reconfiguration of gene expression by associating with the transcriptional corepressor CTBP1 and by subsequently reducing the size of its pool available for nuclear import. Inhibits the activity of the proportion of DAO enzyme that localizes to the presynaptic active zone, which may modulate synaptic transmission. This Rattus norvegicus (Rat) protein is Protein bassoon.